The following is a 158-amino-acid chain: MIGKNIKSLRKTHDLTQLEFARIVGISRNSLSRYENGTSSVSTELIDIICQKFNVSYVDIVGEDKMLNPVEDYELTLKIEIVKERGANLLSRLYRYQDSQGISIDDESNPWILMSDDLSDLIHTNIYLVETFDEIERYSGYLDGIERMLEISEKRMVA.

The HTH cro/C1-type domain maps to 6 to 60 (IKSLRKTHDLTQLEFARIVGISRNSLSRYENGTSSVSTELIDIICQKFNVSYVDI). The H-T-H motif DNA-binding region spans 17 to 36 (QLEFARIVGISRNSLSRYEN).

Probably a homodimer, forms a PezA(2)PezT(2) heterotetramer. The heterotetramer is much more stable than either of the proteins alone, and a specific mechanism may be necessary to liberate the toxin.

Functionally, antitoxin component of a type II toxin-antitoxin (TA) system. Upon expression in E.coli neutralizes the toxic effect of cognate toxin PezT. Represses transcription of its own operon, PezT acts as a corepressor, considerably increasing repression. The chain is Antitoxin PezA (pezA) from Streptococcus pneumoniae serotype 4 (strain ATCC BAA-334 / TIGR4).